The primary structure comprises 364 residues: Aminomethyltransferase (364 aa).

It belongs to the GcvT family. As to quaternary structure, the glycine cleavage system is composed of four proteins: P, T, L and H.

It carries out the reaction N(6)-[(R)-S(8)-aminomethyldihydrolipoyl]-L-lysyl-[protein] + (6S)-5,6,7,8-tetrahydrofolate = N(6)-[(R)-dihydrolipoyl]-L-lysyl-[protein] + (6R)-5,10-methylene-5,6,7,8-tetrahydrofolate + NH4(+). Functionally, the glycine cleavage system catalyzes the degradation of glycine. The protein is Aminomethyltransferase of Staphylococcus carnosus (strain TM300).